Here is a 225-residue protein sequence, read N- to C-terminus: Ribonuclease 3 (225 aa).

The RNase III domain occupies 4 to 133 (FEKLEKLLGY…LIAAIYLDSN (130 aa)). Glu46 provides a ligand contact to Mg(2+). The active site involves Asp50. Residues Asn119 and Glu122 each contribute to the Mg(2+) site. Residue Glu122 is part of the active site. One can recognise a DRBM domain in the interval 158 to 225 (DPKTALQEWA…AARKLLHKLK (68 aa)).

It belongs to the ribonuclease III family. In terms of assembly, homodimer. Mg(2+) serves as cofactor.

It is found in the cytoplasm. It catalyses the reaction Endonucleolytic cleavage to 5'-phosphomonoester.. Functionally, digests double-stranded RNA. Involved in the processing of primary rRNA transcript to yield the immediate precursors to the large and small rRNAs (23S and 16S). Processes some mRNAs, and tRNAs when they are encoded in the rRNA operon. Processes pre-crRNA and tracrRNA of type II CRISPR loci if present in the organism. The protein is Ribonuclease 3 of Rickettsia felis (strain ATCC VR-1525 / URRWXCal2) (Rickettsia azadi).